The sequence spans 183 residues: Inner membrane-spanning protein YciB (183 aa).

5 consecutive transmembrane segments (helical) span residues leucine 19–valine 39, isoleucine 53–phenylalanine 73, tryptophan 76–phenylalanine 96, leucine 121–phenylalanine 141, and threonine 151–proline 171.

This sequence belongs to the YciB family.

It is found in the cell inner membrane. Its function is as follows. Plays a role in cell envelope biogenesis, maintenance of cell envelope integrity and membrane homeostasis. This is Inner membrane-spanning protein YciB from Actinobacillus pleuropneumoniae serotype 3 (strain JL03).